Here is an 89-residue protein sequence, read N- to C-terminus: Small ribosomal subunit protein uS15 (89 aa).

It belongs to the universal ribosomal protein uS15 family. As to quaternary structure, part of the 30S ribosomal subunit. Forms a bridge to the 50S subunit in the 70S ribosome, contacting the 23S rRNA.

Its function is as follows. One of the primary rRNA binding proteins, it binds directly to 16S rRNA where it helps nucleate assembly of the platform of the 30S subunit by binding and bridging several RNA helices of the 16S rRNA. Forms an intersubunit bridge (bridge B4) with the 23S rRNA of the 50S subunit in the ribosome. This chain is Small ribosomal subunit protein uS15, found in Pseudomonas entomophila (strain L48).